Here is a 284-residue protein sequence, read N- to C-terminus: RNase adapter protein RapZ (284 aa).

ATP is bound at residue 8–15 (GRSGSGKS). Position 56-59 (56-59 (DVRN)) interacts with GTP. The segment at 266-284 (RSRGKNVQSRHRTLEKRKS) is RNA-binding.

The protein belongs to the RapZ-like family. RapZ subfamily. As to quaternary structure, homotrimer.

Functionally, modulates the synthesis of GlmS, by affecting the processing and stability of the regulatory small RNA GlmZ. When glucosamine-6-phosphate (GlcN6P) concentrations are high in the cell, RapZ binds GlmZ and targets it to cleavage by RNase E. Consequently, GlmZ is inactivated and unable to activate GlmS synthesis. Under low GlcN6P concentrations, RapZ is sequestered and inactivated by an other regulatory small RNA, GlmY, preventing GlmZ degradation and leading to synthesis of GlmS. The polypeptide is RNase adapter protein RapZ (Klebsiella oxytoca).